Consider the following 355-residue polypeptide: Histidinol-phosphate aminotransferase 2 (355 aa).

The residue at position 210 (Lys-210) is an N6-(pyridoxal phosphate)lysine.

This sequence belongs to the class-II pyridoxal-phosphate-dependent aminotransferase family. Histidinol-phosphate aminotransferase subfamily. As to quaternary structure, homodimer. The cofactor is pyridoxal 5'-phosphate.

It carries out the reaction L-histidinol phosphate + 2-oxoglutarate = 3-(imidazol-4-yl)-2-oxopropyl phosphate + L-glutamate. It participates in amino-acid biosynthesis; L-histidine biosynthesis; L-histidine from 5-phospho-alpha-D-ribose 1-diphosphate: step 7/9. The protein is Histidinol-phosphate aminotransferase 2 of Gluconobacter oxydans (strain 621H) (Gluconobacter suboxydans).